The following is a 409-amino-acid chain: NADH-quinone oxidoreductase subunit D (409 aa).

It belongs to the complex I 49 kDa subunit family. In terms of assembly, NDH-1 is composed of 14 different subunits. Subunits NuoB, C, D, E, F, and G constitute the peripheral sector of the complex.

Its subcellular location is the cell inner membrane. The catalysed reaction is a quinone + NADH + 5 H(+)(in) = a quinol + NAD(+) + 4 H(+)(out). In terms of biological role, NDH-1 shuttles electrons from NADH, via FMN and iron-sulfur (Fe-S) centers, to quinones in the respiratory chain. The immediate electron acceptor for the enzyme in this species is believed to be ubiquinone. Couples the redox reaction to proton translocation (for every two electrons transferred, four hydrogen ions are translocated across the cytoplasmic membrane), and thus conserves the redox energy in a proton gradient. The polypeptide is NADH-quinone oxidoreductase subunit D (Helicobacter hepaticus (strain ATCC 51449 / 3B1)).